A 500-amino-acid chain; its full sequence is L-arabinose isomerase (500 aa).

4 residues coordinate Mn(2+): Glu-306, Glu-333, His-349, and His-448.

It belongs to the arabinose isomerase family. It depends on Mn(2+) as a cofactor.

It catalyses the reaction beta-L-arabinopyranose = L-ribulose. It participates in carbohydrate degradation; L-arabinose degradation via L-ribulose; D-xylulose 5-phosphate from L-arabinose (bacterial route): step 1/3. Functionally, catalyzes the conversion of L-arabinose to L-ribulose. The polypeptide is L-arabinose isomerase (Shewanella sp. (strain MR-4)).